A 575-amino-acid chain; its full sequence is Urease subunit alpha (575 aa).

Residues 137–575 (GGIDSHIHWI…LPMAQRYFLF (439 aa)) form the Urease domain. 3 residues coordinate Ni(2+): H142, H144, and K225. K225 is modified (N6-carboxylysine). H227 provides a ligand contact to substrate. Ni(2+) contacts are provided by H254 and H280. H328 acts as the Proton donor in catalysis. D368 is a binding site for Ni(2+).

Belongs to the metallo-dependent hydrolases superfamily. Urease alpha subunit family. As to quaternary structure, heterotrimer of UreA (gamma), UreB (beta) and UreC (alpha) subunits. Three heterotrimers associate to form the active enzyme. It depends on Ni cation as a cofactor. Carboxylation allows a single lysine to coordinate two nickel ions.

Its subcellular location is the cytoplasm. The catalysed reaction is urea + 2 H2O + H(+) = hydrogencarbonate + 2 NH4(+). It participates in nitrogen metabolism; urea degradation; CO(2) and NH(3) from urea (urease route): step 1/1. This Leptothrix cholodnii (strain ATCC 51168 / LMG 8142 / SP-6) (Leptothrix discophora (strain SP-6)) protein is Urease subunit alpha.